The primary structure comprises 431 residues: Serine--tRNA ligase (431 aa).

Position 235–237 (235–237 (TSE)) interacts with L-serine. 266–268 (RSE) contacts ATP. Glu289 is a binding site for L-serine. 353-356 (EISS) contacts ATP. Ser388 contacts L-serine.

The protein belongs to the class-II aminoacyl-tRNA synthetase family. Type-1 seryl-tRNA synthetase subfamily. In terms of assembly, homodimer. The tRNA molecule binds across the dimer.

Its subcellular location is the cytoplasm. The catalysed reaction is tRNA(Ser) + L-serine + ATP = L-seryl-tRNA(Ser) + AMP + diphosphate + H(+). The enzyme catalyses tRNA(Sec) + L-serine + ATP = L-seryl-tRNA(Sec) + AMP + diphosphate + H(+). The protein operates within aminoacyl-tRNA biosynthesis; selenocysteinyl-tRNA(Sec) biosynthesis; L-seryl-tRNA(Sec) from L-serine and tRNA(Sec): step 1/1. Functionally, catalyzes the attachment of serine to tRNA(Ser). Is also able to aminoacylate tRNA(Sec) with serine, to form the misacylated tRNA L-seryl-tRNA(Sec), which will be further converted into selenocysteinyl-tRNA(Sec). The chain is Serine--tRNA ligase from Paraburkholderia phytofirmans (strain DSM 17436 / LMG 22146 / PsJN) (Burkholderia phytofirmans).